Here is a 178-residue protein sequence, read N- to C-terminus: Probable DNA-directed RNA polymerase subunit delta (178 aa).

An HTH HARE-type domain is found at 14–81 (LSLIDVAHFI…GNNTWGLRAW (68 aa)). 2 disordered regions span residues 89-122 (EEVQTQTTPKKKRKSDDDDDEDEEILDDDVDYDD) and 141-178 (LDEDEDDDDHLPDGIEGDLATVEDDYTDGDYTEDPEDK). Composition is skewed to acidic residues over residues 105–122 (DDDDEDEEILDDDVDYDD), 141–150 (LDEDEDDDDH), and 161–178 (TVEDDYTDGDYTEDPEDK).

It belongs to the RpoE family. RNAP is composed of a core of 2 alpha, a beta and a beta' subunits. The core is associated with a delta subunit and one of several sigma factors.

Participates in both the initiation and recycling phases of transcription. In the presence of the delta subunit, RNAP displays an increased specificity of transcription, a decreased affinity for nucleic acids, and an increased efficiency of RNA synthesis because of enhanced recycling. This Listeria innocua serovar 6a (strain ATCC BAA-680 / CLIP 11262) protein is Probable DNA-directed RNA polymerase subunit delta.